We begin with the raw amino-acid sequence, 479 residues long: Signal recognition particle subunit SRP54 1 (479 aa).

Residues 1-295 (MVLAELGGRI…DVKPFVSRLL (295 aa)) form a G-domain region. GTP contacts are provided by residues 108 to 115 (GLQGAGKT), 190 to 194 (DTSGR), and 248 to 251 (TKMD). The M-domain stretch occupies residues 296–479 (GKGDWSGLVD…MMGMFGGGGK (184 aa)).

This sequence belongs to the GTP-binding SRP family. SRP54 subfamily. In terms of assembly, component of a signal recognition particle (SRP) complex that consists of a 7SL RNA molecule of 300 nucleotides and six protein subunits: SRP72, SRP68, SRP54, SRP19, SRP14 and SRP9.

The protein resides in the cytoplasm. The protein localises to the endoplasmic reticulum. The catalysed reaction is GTP + H2O = GDP + phosphate + H(+). Component of the signal recognition particle (SRP) complex, a ribonucleoprotein complex that mediates the cotranslational targeting of secretory and membrane proteins to the endoplasmic reticulum (ER). As part of the SRP complex, associates with the SRP receptor (SR) component SRPRA to target secretory proteins to the endoplasmic reticulum membrane. Binds to the signal sequence of presecretory proteins when they emerge from the ribosomes. Displays basal GTPase activity, and stimulates reciprocal GTPase activation of the SR subunit SRPRA. Forms a guanosine 5'-triphosphate (GTP)-dependent complex with the SR subunit SRPRA. SR compaction and GTPase mediated rearrangement of SR drive SRP-mediated cotranslational protein translocation into the ER. Requires the presence of SRP9/SRP14 and/or SRP19 to stably interact with RNA. The polypeptide is Signal recognition particle subunit SRP54 1 (SRP-54A) (Arabidopsis thaliana (Mouse-ear cress)).